The primary structure comprises 314 residues: Dihydropteroate synthase (314 aa).

In terms of domain architecture, Pterin-binding spans 10–294 (TVICGIINVT…DVASHRMAVE (285 aa)). Residue N17 participates in Mg(2+) binding. (7,8-dihydropterin-6-yl)methyl diphosphate contacts are provided by residues T57, D91, N110, D201, K237, and 282–284 (RVH).

It belongs to the DHPS family. In terms of assembly, homodimer or homotrimer. It depends on Mg(2+) as a cofactor.

The catalysed reaction is (7,8-dihydropterin-6-yl)methyl diphosphate + 4-aminobenzoate = 7,8-dihydropteroate + diphosphate. It participates in cofactor biosynthesis; tetrahydrofolate biosynthesis; 7,8-dihydrofolate from 2-amino-4-hydroxy-6-hydroxymethyl-7,8-dihydropteridine diphosphate and 4-aminobenzoate: step 1/2. In terms of biological role, catalyzes the condensation of para-aminobenzoate (pABA) with 6-hydroxymethyl-7,8-dihydropterin diphosphate (DHPt-PP) to form 7,8-dihydropteroate (H2Pte), the immediate precursor of folate derivatives. This is Dihydropteroate synthase (sulA) from Streptococcus pneumoniae serotype 4 (strain ATCC BAA-334 / TIGR4).